The primary structure comprises 291 residues: uncharacterized protein (291 aa).

The segment at Met1 to Ser55 is disordered. The next 2 helical transmembrane spans lie at Trp74–Ala96 and Tyr188–Leu210.

To T.pallidum TP_0733.

The protein localises to the cell membrane. This is an uncharacterized protein from Treponema pallidum (strain Nichols).